The primary structure comprises 397 residues: Oxysterol-binding protein homolog C354.07c (397 aa).

N-linked (GlcNAc...) asparagine glycans are attached at residues asparagine 186 and asparagine 195.

This sequence belongs to the OSBP family.

Its subcellular location is the endoplasmic reticulum. This chain is Oxysterol-binding protein homolog C354.07c, found in Schizosaccharomyces pombe (strain 972 / ATCC 24843) (Fission yeast).